The following is a 464-amino-acid chain: Divalent metal cation transporter MntH (464 aa).

11 helical membrane-spanning segments follow: residues 57-77, 82-102, 125-145, 157-177, 186-206, 229-249, 281-301, 321-341, 376-396, 399-419, and 443-463; these read ILIA…AGGA, SLLS…SMAA, GIIL…AEII, IPLV…LLLM, AIVA…VFLA, MLYL…LYLG, LTIA…LFFG, IVGA…LLSS, LLSV…EAKI, LLTL…VPLV, and VATV…VGVI.

Belongs to the NRAMP family.

It is found in the cell membrane. In terms of biological role, h(+)-stimulated, divalent metal cation uptake system. In Levilactobacillus brevis (Lactobacillus brevis), this protein is Divalent metal cation transporter MntH.